We begin with the raw amino-acid sequence, 195 residues long: ATP-dependent Clp protease proteolytic subunit (195 aa).

The active-site Nucleophile is the Ser101. The active site involves His126.

Belongs to the peptidase S14 family. In terms of assembly, component of the chloroplastic Clp protease core complex.

The protein localises to the plastid. The protein resides in the chloroplast stroma. The enzyme catalyses Hydrolysis of proteins to small peptides in the presence of ATP and magnesium. alpha-casein is the usual test substrate. In the absence of ATP, only oligopeptides shorter than five residues are hydrolyzed (such as succinyl-Leu-Tyr-|-NHMec, and Leu-Tyr-Leu-|-Tyr-Trp, in which cleavage of the -Tyr-|-Leu- and -Tyr-|-Trp bonds also occurs).. Its function is as follows. Cleaves peptides in various proteins in a process that requires ATP hydrolysis. Has a chymotrypsin-like activity. Plays a major role in the degradation of misfolded proteins. The polypeptide is ATP-dependent Clp protease proteolytic subunit (Cucumis sativus (Cucumber)).